The following is a 125-amino-acid chain: Succinate dehydrogenase cytochrome b556 subunit (125 aa).

Residues 1-22 (MNAKRPVNLDLTKFHFPPMAIL) are Cytoplasmic-facing. Residues 23–48 (SIGHRISGFVLFLCMPLMFYLLHRAT) traverse the membrane as a helical segment. The Periplasmic portion of the chain corresponds to 49–65 (ASAESFYHLHQLLLHNG). A helical transmembrane segment spans residues 66-86 (WIKLAVWIMLSATLFHLFAGI). Position 81 (His-81) interacts with heme. The Cytoplasmic portion of the chain corresponds to 87-104 (RHLAMDLGFWESVPEGRI). The helical transmembrane segment at 105 to 125 (SAYTVFVVSFIAIVLAGVWIW) threads the bilayer.

It belongs to the cytochrome b560 family. As to quaternary structure, part of an enzyme complex containing four subunits: a flavoprotein, an iron-sulfur protein, plus two membrane-anchoring proteins, SdhC and SdhD. The complex can form homotrimers. It depends on heme as a cofactor.

Its subcellular location is the cell inner membrane. It participates in carbohydrate metabolism; tricarboxylic acid cycle. Membrane-anchoring subunit of succinate dehydrogenase (SDH). This chain is Succinate dehydrogenase cytochrome b556 subunit (sdhC), found in Coxiella burnetii (strain RSA 493 / Nine Mile phase I).